A 164-amino-acid polypeptide reads, in one-letter code: Transmembrane protein 234 (164 aa).

A run of 3 helical transmembrane segments spans residues 1–21 (MAAS…WGGT), 82–102 (LAVP…GKAL), and 112–132 (VAGM…SVPW).

This sequence belongs to the TMEM234 family.

It localises to the membrane. This chain is Transmembrane protein 234 (TMEM234), found in Homo sapiens (Human).